The following is a 399-amino-acid chain: MNKKKILKFICSAVLSFTLFSGYKSYAWDGKVDGTGTHALIVTQAVEILKNDVISTSPLSVKENFKILESNLKKLQRGSTYPDYDPKAYALYQDHFWDPDTDNNFTKDSKWYLAYGINETGESQLRKLFALAKDEWKKGNYEQATWLLGQGLHYFGDFHTPYHPSNVTAVDSAGHTKFETYVEGKKDSYKLHTAGANSVKEFYPTTLQNTNLDNWITEYSRGWAKKAKNMYYAHATMSHSWKDWEIAATETMHNVQIGSAGIIYRFLNEVSGTINTTENSKINEIMVVIKTANEDKAGTDHYIHFGIEAKDGKKYEWTLDNPGNDFEKNQEDSYRINLKDNKLTLQDIAKTWIRKERGAGVRDDWKPEYVKVIINSDVKYQANINEWFGDNKTFYINNK.

A signal peptide spans 1-28; it reads MNKKKILKFICSAVLSFTLFSGYKSYAW. Zn(2+) contacts are provided by Trp28, His38, Asp83, His95, His153, Asp157, His163, His175, and Glu179. Residues 29–277 form the Zn-dependent PLC domain; it reads DGKVDGTGTH…NEVSGTINTT (249 aa). A linker region spans residues 275-282; the sequence is NTTENSKI. Residues 283 to 399 form the PLAT domain; that stretch reads NEIMVVIKTA…DNKTFYINNK (117 aa). Residues Gly298, Thr299, Asp300, Asp320, Asn321, Gly323, Asn324, Asp325, and Asp363 each coordinate Ca(2+).

Belongs to the bacterial zinc-metallophospholipase C family. Requires Ca(2+) as cofactor. It depends on Zn(2+) as a cofactor.

It is found in the secreted. The catalysed reaction is a 1,2-diacyl-sn-glycero-3-phosphocholine + H2O = phosphocholine + a 1,2-diacyl-sn-glycerol + H(+). In terms of biological role, bacterial hemolysins are exotoxins that attack blood cell membranes and cause cell rupture. Binds to eukaryotic membranes where it hydrolyzes phosphatidylcholine, sphingomyelin and phosphatidylethanolamine. The diacylglycerol produced can activate both the arachidonic acid pathway, leading to modulation of the inflammatory response cascade and thrombosis, and protein kinase C, leading to activation of eukaryotic phospholipases and further membrane damage. This is Phospholipase C (plc) from Clostridium haemolyticum.